The primary structure comprises 689 residues: Pyocin-S2 (689 aa).

Residues histidine 656, histidine 681, and histidine 685 each coordinate Zn(2+).

This sequence belongs to the colicin/pyosin nuclease family. In terms of assembly, purified pyocin S2 makes up a complex of the two (large and small) proteins. The large protein, but not the pyocin complex, shows in vitro DNase activity.

Functionally, causes breakdown of chromosomal DNA as well as complete inhibition of lipid synthesis in sensitive cells. The polypeptide is Pyocin-S2 (pys2) (Pseudomonas aeruginosa (strain ATCC 15692 / DSM 22644 / CIP 104116 / JCM 14847 / LMG 12228 / 1C / PRS 101 / PAO1)).